We begin with the raw amino-acid sequence, 488 residues long: uncharacterized protein (488 aa).

27-38 (IVHFGFGAFHRA) serves as a coordination point for NAD(+).

It belongs to the mannitol dehydrogenase family. UxuB subfamily.

This is an uncharacterized protein from Escherichia coli (strain K12).